The following is a 1218-amino-acid chain: Coatomer subunit alpha-1 (1218 aa).

WD repeat units follow at residues 7–48 (TKSN…DRFD), 49–88 (EHDG…CLFT), 91–132 (GHLD…AVLT), 133–172 (GHNH…KKTV), 202–241 (GHDR…AWEV), 246–285 (GHMN…GIQT), 288–326 (REHD…PAFS), 363–404 (SLNQ…AGRA), and 450–489 (PLPI…GELQ). The disordered stretch occupies residues 857–882 (NGGDGFDAEEGEANEEDGEEGGWDLE). Positions 862–882 (FDAEEGEANEEDGEEGGWDLE) are enriched in acidic residues.

In terms of assembly, oligomeric complex that consists of at least the alpha, beta, beta', gamma, delta, epsilon and zeta subunits.

It is found in the cytoplasm. It localises to the golgi apparatus membrane. The protein resides in the cytoplasmic vesicle. Its subcellular location is the COPI-coated vesicle membrane. Functionally, the coatomer is a cytosolic protein complex that binds to dilysine motifs and reversibly associates with Golgi non-clathrin-coated vesicles, which further mediate biosynthetic protein transport from the ER, via the Golgi up to the trans Golgi network. Coatomer complex is required for budding from Golgi membranes, and is essential for the retrograde Golgi-to-ER transport of dilysine-tagged proteins. The sequence is that of Coatomer subunit alpha-1 from Oryza sativa subsp. japonica (Rice).